An 860-amino-acid chain; its full sequence is Nuclear cap-binding protein complex subunit 1 (860 aa).

The region spanning 36 to 271 (CKDMLPDIRT…SNVKNALAND (236 aa)) is the MIF4G domain.

It belongs to the NCBP1 family. As to quaternary structure, component of the nuclear cap-binding complex (CBC).

The protein resides in the nucleus. Functionally, component of the cap-binding complex (CBC) involved in the nuclear export of capped U snRNAs. The CBC complex is required for efficient pre-mRNA splicing through efficient commitment complex and spliceosome formation; and involved in rRNA processing at sites A0, A1 and A2. The protein is Nuclear cap-binding protein complex subunit 1 (CBC1) of Eremothecium gossypii (strain ATCC 10895 / CBS 109.51 / FGSC 9923 / NRRL Y-1056) (Yeast).